Reading from the N-terminus, the 235-residue chain is 15,16-dihydrobiliverdin:ferredoxin oxidoreductase (235 aa).

Belongs to the HY2 family.

It catalyses the reaction 15,16-dihydrobiliverdin + oxidized 2[4Fe-4S]-[ferredoxin] = biliverdin IXalpha + reduced 2[4Fe-4S]-[ferredoxin] + 2 H(+). In terms of biological role, catalyzes the two-electron reduction of biliverdin IX-alpha at the C15 methine bridge. This Synechococcus sp. (strain CC9902) protein is 15,16-dihydrobiliverdin:ferredoxin oxidoreductase.